The following is a 267-amino-acid chain: tRNA pseudouridine synthase A (267 aa).

The active-site Nucleophile is aspartate 55. Tyrosine 111 serves as a coordination point for substrate.

It belongs to the tRNA pseudouridine synthase TruA family.

The enzyme catalyses uridine(38/39/40) in tRNA = pseudouridine(38/39/40) in tRNA. In terms of biological role, formation of pseudouridine at positions 38, 39 and 40 in the anticodon stem and loop of transfer RNAs. The sequence is that of tRNA pseudouridine synthase A from Thermococcus onnurineus (strain NA1).